A 663-amino-acid chain; its full sequence is Methionine--tRNA ligase (663 aa).

The short motif at Pro-13 to His-23 is the 'HIGH' region element. Positions 144, 147, 156, and 160 each coordinate Zn(2+). The 'KMSKS' region signature appears at Lys-326–Ser-330. Lys-329 provides a ligand contact to ATP. In terms of domain architecture, tRNA-binding spans Glu-565 to Arg-663.

The protein belongs to the class-I aminoacyl-tRNA synthetase family. MetG type 1 subfamily. As to quaternary structure, homodimer. The cofactor is Zn(2+).

The protein resides in the cytoplasm. It carries out the reaction tRNA(Met) + L-methionine + ATP = L-methionyl-tRNA(Met) + AMP + diphosphate. In terms of biological role, is required not only for elongation of protein synthesis but also for the initiation of all mRNA translation through initiator tRNA(fMet) aminoacylation. The protein is Methionine--tRNA ligase of Methanosphaerula palustris (strain ATCC BAA-1556 / DSM 19958 / E1-9c).